The following is a 468-amino-acid chain: 3-isopropylmalate dehydratase large subunit (468 aa).

Residues cysteine 349, cysteine 409, and cysteine 412 each coordinate [4Fe-4S] cluster.

Belongs to the aconitase/IPM isomerase family. LeuC type 1 subfamily. Heterodimer of LeuC and LeuD. Requires [4Fe-4S] cluster as cofactor.

It catalyses the reaction (2R,3S)-3-isopropylmalate = (2S)-2-isopropylmalate. Its pathway is amino-acid biosynthesis; L-leucine biosynthesis; L-leucine from 3-methyl-2-oxobutanoate: step 2/4. In terms of biological role, catalyzes the isomerization between 2-isopropylmalate and 3-isopropylmalate, via the formation of 2-isopropylmaleate. This is 3-isopropylmalate dehydratase large subunit from Nitrobacter winogradskyi (strain ATCC 25391 / DSM 10237 / CIP 104748 / NCIMB 11846 / Nb-255).